Consider the following 233-residue polypeptide: uncharacterized protein (233 aa).

This sequence belongs to the methyltransferase superfamily.

This is an uncharacterized protein from Bacillus subtilis (strain 168).